The chain runs to 251 residues: Ubiquinone/menaquinone biosynthesis C-methyltransferase UbiE (251 aa).

S-adenosyl-L-methionine contacts are provided by residues T74, D95, 123–124, and S140; that span reads NA.

The protein belongs to the class I-like SAM-binding methyltransferase superfamily. MenG/UbiE family.

The catalysed reaction is a 2-demethylmenaquinol + S-adenosyl-L-methionine = a menaquinol + S-adenosyl-L-homocysteine + H(+). The enzyme catalyses a 2-methoxy-6-(all-trans-polyprenyl)benzene-1,4-diol + S-adenosyl-L-methionine = a 5-methoxy-2-methyl-3-(all-trans-polyprenyl)benzene-1,4-diol + S-adenosyl-L-homocysteine + H(+). The protein operates within quinol/quinone metabolism; menaquinone biosynthesis; menaquinol from 1,4-dihydroxy-2-naphthoate: step 2/2. It functions in the pathway cofactor biosynthesis; ubiquinone biosynthesis. In terms of biological role, methyltransferase required for the conversion of demethylmenaquinol (DMKH2) to menaquinol (MKH2) and the conversion of 2-polyprenyl-6-methoxy-1,4-benzoquinol (DDMQH2) to 2-polyprenyl-3-methyl-6-methoxy-1,4-benzoquinol (DMQH2). The sequence is that of Ubiquinone/menaquinone biosynthesis C-methyltransferase UbiE from Salmonella paratyphi A (strain AKU_12601).